Reading from the N-terminus, the 102-residue chain is Putative pterin-4-alpha-carbinolamine dehydratase (102 aa).

This sequence belongs to the pterin-4-alpha-carbinolamine dehydratase family.

It catalyses the reaction (4aS,6R)-4a-hydroxy-L-erythro-5,6,7,8-tetrahydrobiopterin = (6R)-L-erythro-6,7-dihydrobiopterin + H2O. This is Putative pterin-4-alpha-carbinolamine dehydratase from Burkholderia cenocepacia (strain ATCC BAA-245 / DSM 16553 / LMG 16656 / NCTC 13227 / J2315 / CF5610) (Burkholderia cepacia (strain J2315)).